The following is an 833-amino-acid chain: Transmembrane protease serine 7 (833 aa).

Over 1-62 (MDKEKSDPSC…RAPFWNVQNK (62 aa)) the chain is Cytoplasmic. Positions 30 to 49 (KLPGRRLPRKPIGKARPRKQ) are disordered. Basic residues predominate over residues 32-49 (PGRRLPRKPIGKARPRKQ). A helical; Signal-anchor for type II membrane protein membrane pass occupies residues 63–83 (IILFTVFLFILAVTAWTLLWL). The Extracellular portion of the chain corresponds to 84 to 829 (YISKTDSKDA…NFVPWIHKYV (746 aa)). Residues 92–220 (DAFYFVGMFR…DSVVLNAGLR (129 aa)) enclose the SEA domain. N196 carries N-linked (GlcNAc...) asparagine glycosylation. 3 disulfide bridges follow: C233/C259, C285/C312, and C355/C386. 2 CUB domains span residues 233-350 (CSQY…FEVI) and 355-471 (CENT…YNIS). Residues N405 and N469 are each glycosylated (N-linked (GlcNAc...) asparagine). 2 LDL-receptor class A domains span residues 473–509 (PCPAGSFRCSSGLCVPQAQRCDGVNDCFDESDELFCV) and 548–585 (PCTNRTFKCGNDICFRKQNAQCDGIVDCPDRSDEEGCG). Disulfide bonds link C474-C486, C481-C499, C493-C508, C549-C561, C556-C575, C569-C584, and C621-C637. The Peptidase S1 domain occupies 596-830 (VVGGSDSQEG…FVPWIHKYVP (235 aa)). Residues H636 and D684 each act as charge relay system in the active site. Cystine bridges form between C720/C786, C752/C765, and C776/C806. The active-site Charge relay system is the S780.

It belongs to the peptidase S1 family. In terms of assembly, forms a heterodimer with SERPINA5. N-glycosylated.

Its subcellular location is the cell membrane. Serine protease which preferentially hydrolyzes peptides with Arg at the P1 position. The sequence is that of Transmembrane protease serine 7 from Rattus norvegicus (Rat).